The sequence spans 102 residues: Large ribosomal subunit protein uL24 (102 aa).

This sequence belongs to the universal ribosomal protein uL24 family. As to quaternary structure, part of the 50S ribosomal subunit.

In terms of biological role, one of two assembly initiator proteins, it binds directly to the 5'-end of the 23S rRNA, where it nucleates assembly of the 50S subunit. Functionally, one of the proteins that surrounds the polypeptide exit tunnel on the outside of the subunit. The chain is Large ribosomal subunit protein uL24 from Burkholderia mallei (strain NCTC 10229).